The primary structure comprises 168 residues: G/U mismatch-specific DNA glycosylase (168 aa).

It belongs to the uracil-DNA glycosylase (UDG) superfamily. TDG/mug family. Binds DNA as a monomer.

It localises to the cytoplasm. The catalysed reaction is Specifically hydrolyzes mismatched double-stranded DNA and polynucleotides, releasing free uracil.. Its function is as follows. Excises ethenocytosine and uracil, which can arise by alkylation or deamination of cytosine, respectively, from the corresponding mispairs with guanine in ds-DNA. It is capable of hydrolyzing the carbon-nitrogen bond between the sugar-phosphate backbone of the DNA and the mispaired base. The complementary strand guanine functions in substrate recognition. Required for DNA damage lesion repair in stationary-phase cells. This is G/U mismatch-specific DNA glycosylase from Escherichia coli O157:H7 (strain EC4115 / EHEC).